A 495-amino-acid chain; its full sequence is NADP/NAD-dependent aldehyde dehydrogenase PuuC (495 aa).

Position 244–249 (244–249 (GSTRTG)) interacts with NAD(+). Catalysis depends on residues E267 and C302.

The protein belongs to the aldehyde dehydrogenase family.

It carries out the reaction an aldehyde + NADP(+) + H2O = a carboxylate + NADPH + 2 H(+). The catalysed reaction is an aldehyde + NAD(+) + H2O = a carboxylate + NADH + 2 H(+). The enzyme catalyses 4-(gamma-L-glutamylamino)butanal + NADP(+) + H2O = 4-(gamma-L-glutamylamino)butanoate + NADPH + 2 H(+). It catalyses the reaction 4-(gamma-L-glutamylamino)butanal + NAD(+) + H2O = 4-(gamma-L-glutamylamino)butanoate + NADH + 2 H(+). Its pathway is amine and polyamine degradation; putrescine degradation; 4-aminobutanoate from putrescine: step 3/4. Its activity is regulated as follows. Lithium ions exhibits the highest inhibition (97%). To a lesser extent (5-20%), potassium, sodium, and ammonium ions also inhibit PuuC activity. Transition metals, such as copper and zinc ions inhibit PuuC activity by more than 90%. The presence of heavy metals (mercury, silver) or sodium hydrogensulfite in the reaction mixture completely inactivate PuuC; in contrast, disulfide reductants such as DTT and 2-mercaptoethanol significantly increase its activity by 75% and 27%, respectively. Its function is as follows. Catalyzes the oxidation of 3-hydroxypropionaldehyde (3-HPA) to 3-hydroxypropionic acid (3-HP). It acts preferentially with NAD but can also use NADP. 3-HPA appears to be the most suitable substrate for PuuC followed by isovaleraldehyde, propionaldehyde, butyraldehyde, and valeraldehyde. It might play a role in propionate and/or acetic acid metabolisms. Also involved in the breakdown of putrescine through the oxidation of gamma-Glu-gamma-aminobutyraldehyde to gamma-Glu-gamma-aminobutyrate (gamma-Glu-GABA). The protein is NADP/NAD-dependent aldehyde dehydrogenase PuuC of Escherichia coli (strain K12).